Here is a 445-residue protein sequence, read N- to C-terminus: RNA-binding protein asd-2 (445 aa).

Positions 22 to 63 (TVIPPPPNDSGHEFIGPSSGPPQVTITPSGVQSGSANGVSTS) are disordered. A compositionally biased stretch (polar residues) spans 42-63 (PPQVTITPSGVQSGSANGVSTS). A qua1 domain region spans residues 71-128 (EYLSQLLKDKKQLAAFPNVFHHLERLADEEINKVRVVLFQCEFSKESAPLPDAEGDST). In terms of domain architecture, KH spans 145-171 (NFVGRILGPRGMTAKQLEQETGCKIMV). A qua2 domain; involved in RNA binding region spans residues 230–253 (APEGEDDLKRKQLMELAIINGTYR).

As to quaternary structure, interacts with sup-12; in the presence of RNA, but with weak affinity in the absence of RNA. Isoform b: Expressed in the hypodermis and pharyngeal muscles. Isoform c: Expressed in body wall muscles and phayngeal muscles.

It is found in the nucleus. Its function is as follows. RNA-binding protein that binds to the 5'-NACUAAY-N(1,20)-UAAY-3' consensus sequence in pre-mRNA introns to promote alternative splicing. Required for mutually exclusive alternative splicing where it modulates the switch between mutually exclusive exons during pre-mRNA maturation. Involved in muscle-specific gene expression regulating the alternative splicing of genes such as let-2 and unc-60 to ensure that their respective isoforms are expressed in muscle. Promotes the removal of intron 10 from let-2 pre-mRNA to allow for the exclusive expression of the muscle-specific let-2 isoform (as opposed to the non-muscle-specific isoform expressed in embryos) in body wall muscles during late larval and adult stages of development. Binds cooperatively with RNA-binding protein sup-12 to intron 1A of the unc-60 pre-mRNA to promote alternative splicing and expression of the muscle specific isoform of unc-60. The sequence is that of RNA-binding protein asd-2 from Caenorhabditis elegans.